We begin with the raw amino-acid sequence, 683 residues long: Probable potassium transport system protein Kup 1 (683 aa).

12 helical membrane-spanning segments follow: residues 13 to 33 (GLLIAIGIVYGDIGTSPLYVM), 55 to 75 (ISLVLWTVTLLTTLQTVFIAL), 98 to 118 (WLVLPALIGGAAILADGTLTP), 139 to 159 (VPVSTQGTVIAITVVILLLLF), 168 to 188 (IIGKAFGPIMFIWFTFLGVIG), 218 to 238 (AGIFILGSIFLATTGAEALYS), 251 to 271 (SWPYVFVCLSLNYFGQGVWIL), 296 to 316 (LAAIVLATIAAVIASQALITG), 345 to 365 (IYIPSVNKMICAATIAIVLFF), 376 to 396 (GLSITISMLMTTILLYEWLAM), 401 to 421 (TIWNWLFLIFFGFLDVMFMLA), and 426 to 446 (FMHGGYVSLVIAGFIGIIMYV).

This sequence belongs to the HAK/KUP transporter (TC 2.A.72) family.

The protein resides in the cell membrane. It carries out the reaction K(+)(in) + H(+)(in) = K(+)(out) + H(+)(out). Functionally, transport of potassium into the cell. Likely operates as a K(+):H(+) symporter. This Lactobacillus johnsonii (strain CNCM I-12250 / La1 / NCC 533) protein is Probable potassium transport system protein Kup 1.